We begin with the raw amino-acid sequence, 521 residues long: Anthranilate synthase component 1 (521 aa).

Residues threonine 40 and 292–294 (PYM) contribute to the L-tryptophan site. Chorismate is bound at residue 329-330 (GT). Glutamate 362 is a Mg(2+) binding site. Residues tyrosine 450, arginine 470, 484-486 (GAG), and glycine 486 each bind chorismate. Glutamate 499 serves as a coordination point for Mg(2+).

It belongs to the anthranilate synthase component I family. Heterotetramer consisting of two non-identical subunits: a beta subunit (TrpG) and a large alpha subunit (TrpE). Requires Mg(2+) as cofactor.

It catalyses the reaction chorismate + L-glutamine = anthranilate + pyruvate + L-glutamate + H(+). Its pathway is amino-acid biosynthesis; L-tryptophan biosynthesis; L-tryptophan from chorismate: step 1/5. With respect to regulation, feedback inhibited by tryptophan. Part of a heterotetrameric complex that catalyzes the two-step biosynthesis of anthranilate, an intermediate in the biosynthesis of L-tryptophan. In the first step, the glutamine-binding beta subunit (TrpG) of anthranilate synthase (AS) provides the glutamine amidotransferase activity which generates ammonia as a substrate that, along with chorismate, is used in the second step, catalyzed by the large alpha subunit of AS (TrpE) to produce anthranilate. In the absence of TrpG, TrpE can synthesize anthranilate directly from chorismate and high concentrations of ammonia. This Buchnera aphidicola subsp. Acyrthosiphon pisum (strain APS) (Acyrthosiphon pisum symbiotic bacterium) protein is Anthranilate synthase component 1 (trpE).